We begin with the raw amino-acid sequence, 140 residues long: Nucleoside diphosphate kinase (140 aa).

ATP contacts are provided by Lys11, Phe59, Arg87, Thr93, Arg104, and Asn114. His117 functions as the Pros-phosphohistidine intermediate in the catalytic mechanism.

Belongs to the NDK family. In terms of assembly, homotetramer. The cofactor is Mg(2+).

The protein resides in the cytoplasm. It catalyses the reaction a 2'-deoxyribonucleoside 5'-diphosphate + ATP = a 2'-deoxyribonucleoside 5'-triphosphate + ADP. The enzyme catalyses a ribonucleoside 5'-diphosphate + ATP = a ribonucleoside 5'-triphosphate + ADP. In terms of biological role, major role in the synthesis of nucleoside triphosphates other than ATP. The ATP gamma phosphate is transferred to the NDP beta phosphate via a ping-pong mechanism, using a phosphorylated active-site intermediate. The chain is Nucleoside diphosphate kinase from Bartonella tribocorum (strain CIP 105476 / IBS 506).